The chain runs to 344 residues: MTSAAITPPTTVDRPMTDPFGRTIDYLRVSITDRCDFRCVYCMAEDMTFLPRADLLTLEELDRLCSAFIAKGVRKLRLTGGEPLVRRNMMSLVRSLSRHLKTGALDELTLTTNGSQLARFAAELADCGVRRVNVSLDTLDPDEFRRITRWGDLDRVLAGINAARAAGLAVKINSVVLKGSNEDEIPSLMRWAHGLGMGLTLIEVMPLGEIGEGRIDQYVPLSLIRARLSANYTLTDLPDSTGGPARYVRVEETGGRLGFITPLTHNFCESCNRVRITCTGTIHTCLGHEDASDLRRPLRASADDALLSAAIDQAIGSKPKGHDFIIDRRHNRPSVSRHMSVTGG.

The Radical SAM core domain occupies 19 to 239 (PFGRTIDYLR…ANYTLTDLPD (221 aa)). Arginine 28 lines the GTP pocket. Residues cysteine 35 and cysteine 39 each contribute to the [4Fe-4S] cluster site. Tyrosine 41 contributes to the S-adenosyl-L-methionine binding site. Cysteine 42 is a [4Fe-4S] cluster binding site. Arginine 77 is a binding site for GTP. Residue glycine 81 coordinates S-adenosyl-L-methionine. Position 111 (threonine 111) interacts with GTP. Position 135 (serine 135) interacts with S-adenosyl-L-methionine. Position 171 (lysine 171) interacts with GTP. Methionine 205 contacts S-adenosyl-L-methionine. The [4Fe-4S] cluster site is built by cysteine 268 and cysteine 271. 273–275 (RVR) contributes to the GTP binding site. Residue cysteine 285 participates in [4Fe-4S] cluster binding.

Belongs to the radical SAM superfamily. MoaA family. As to quaternary structure, monomer and homodimer. [4Fe-4S] cluster serves as cofactor.

It carries out the reaction GTP + AH2 + S-adenosyl-L-methionine = (8S)-3',8-cyclo-7,8-dihydroguanosine 5'-triphosphate + 5'-deoxyadenosine + L-methionine + A + H(+). The protein operates within cofactor biosynthesis; molybdopterin biosynthesis. In terms of biological role, catalyzes the cyclization of GTP to (8S)-3',8-cyclo-7,8-dihydroguanosine 5'-triphosphate. The polypeptide is GTP 3',8-cyclase (Rhodopseudomonas palustris (strain TIE-1)).